The sequence spans 224 residues: UPF0758 protein VFMJ11_0123 (224 aa).

The MPN domain maps to 102–224 (ALTSPEHTKR…IVSFAERGWI (123 aa)). Zn(2+) contacts are provided by His173, His175, and Asp186. A JAMM motif motif is present at residues 173 to 186 (HNHPSGVAEPSQAD).

It belongs to the UPF0758 family.

This Aliivibrio fischeri (strain MJ11) (Vibrio fischeri) protein is UPF0758 protein VFMJ11_0123.